A 305-amino-acid chain; its full sequence is uncharacterized protein (305 aa).

The chain crosses the membrane as a helical span at residues 8–28 (IGALVTAVIAIGIVFSHMILF).

It is found in the membrane. This is an uncharacterized protein from Bacillus subtilis (strain 168).